Consider the following 397-residue polypeptide: Carbamoyl phosphate synthase small chain (397 aa).

Residues 1–204 form a CPSase region; sequence MSPLLPSFPF…PAYRTLDTSK (204 aa). The L-glutamine site is built by S53, G256, and G258. Residues 208 to 395 form the Glutamine amidotransferase type-1 domain; it reads KVVAYDFGVK…MELMNAAKKE (188 aa). The active-site Nucleophile is C284. L-glutamine-binding residues include L285, Q288, N326, G328, and F329. Active-site residues include H368 and E370.

This sequence belongs to the CarA family. As to quaternary structure, composed of two chains; the small (or glutamine) chain promotes the hydrolysis of glutamine to ammonia, which is used by the large (or ammonia) chain to synthesize carbamoyl phosphate. Tetramer of heterodimers (alpha,beta)4.

The enzyme catalyses hydrogencarbonate + L-glutamine + 2 ATP + H2O = carbamoyl phosphate + L-glutamate + 2 ADP + phosphate + 2 H(+). The catalysed reaction is L-glutamine + H2O = L-glutamate + NH4(+). Its pathway is amino-acid biosynthesis; L-arginine biosynthesis; carbamoyl phosphate from bicarbonate: step 1/1. It participates in pyrimidine metabolism; UMP biosynthesis via de novo pathway; (S)-dihydroorotate from bicarbonate: step 1/3. Small subunit of the glutamine-dependent carbamoyl phosphate synthetase (CPSase). CPSase catalyzes the formation of carbamoyl phosphate from the ammonia moiety of glutamine, carbonate, and phosphate donated by ATP, constituting the first step of 2 biosynthetic pathways, one leading to arginine and/or urea and the other to pyrimidine nucleotides. The small subunit (glutamine amidotransferase) binds and cleaves glutamine to supply the large subunit with the substrate ammonia. The sequence is that of Carbamoyl phosphate synthase small chain from Polynucleobacter asymbioticus (strain DSM 18221 / CIP 109841 / QLW-P1DMWA-1) (Polynucleobacter necessarius subsp. asymbioticus).